A 224-amino-acid polypeptide reads, in one-letter code: Deoxyribose-phosphate aldolase (224 aa).

The active-site Proton donor/acceptor is Asp94. Residue Lys158 is the Schiff-base intermediate with acetaldehyde of the active site. Lys187 acts as the Proton donor/acceptor in catalysis.

This sequence belongs to the DeoC/FbaB aldolase family. DeoC type 1 subfamily. As to quaternary structure, homodimer.

It localises to the cytoplasm. It carries out the reaction 2-deoxy-D-ribose 5-phosphate = D-glyceraldehyde 3-phosphate + acetaldehyde. With respect to regulation, activated by citrate. Inhibited by NaBH(4). Activity is independent of divalent metal cations. Catalyzes a reversible aldol reaction between acetaldehyde and D-glyceraldehyde 3-phosphate to generate 2-deoxy-D-ribose 5-phosphate. Could be involved in pentose biosynthesis. This Thermococcus kodakarensis (strain ATCC BAA-918 / JCM 12380 / KOD1) (Pyrococcus kodakaraensis (strain KOD1)) protein is Deoxyribose-phosphate aldolase.